A 258-amino-acid polypeptide reads, in one-letter code: tRNA pseudouridine synthase A (258 aa).

Asp-52 (nucleophile) is an active-site residue. Residue Tyr-110 coordinates substrate.

It belongs to the tRNA pseudouridine synthase TruA family. In terms of assembly, homodimer.

The catalysed reaction is uridine(38/39/40) in tRNA = pseudouridine(38/39/40) in tRNA. Formation of pseudouridine at positions 38, 39 and 40 in the anticodon stem and loop of transfer RNAs. This chain is tRNA pseudouridine synthase A, found in Francisella tularensis subsp. holarctica (strain LVS).